The primary structure comprises 105 residues: ATPase inhibitor A, mitochondrial (105 aa).

Positions 17 to 52 (MSSDQLGELGTGAGKGGGGGGSVRAAGGSFGRREAA) are disordered. The interval 22–51 (LGELGTGAGKGGGGGGSVRAAGGSFGRREA) is N-terminal inhibitory region. Residues 25–38 (LGTGAGKGGGGGGS) are compositionally biased toward gly residues. Residues 58 to 105 (FRQKEREQLAALKNHHEEEIDHHKKEIERLQREIDRHKGKIRKLKHDD) adopt a coiled-coil conformation. The antiparallel alpha-helical coiled coil region stretch occupies residues 73 to 105 (HEEEIDHHKKEIERLQREIDRHKGKIRKLKHDD).

This sequence belongs to the ATPase inhibitor family. As to quaternary structure, homodimer; represents the active form and is present at a pH value below 6.5. Homotetramer; represents the inactive form and is present at a pH value above 7.0.

It is found in the mitochondrion. In terms of biological role, endogenous F(1)F(o)-ATPase inhibitor limiting ATP depletion when the mitochondrial membrane potential falls below a threshold and the F(1)F(o)-ATP synthase starts hydrolyzing ATP to pump protons out of the mitochondrial matrix. Required to avoid the consumption of cellular ATP when the F(1)F(o)-ATP synthase enzyme acts as an ATP hydrolase. Indirectly acts as a regulator of heme synthesis in erythroid tissues: regulates heme synthesis by modulating the mitochondrial pH and redox potential, allowing fech to efficiently catalyze the incorporation of iron into protoporphyrin IX to produce heme. The protein is ATPase inhibitor A, mitochondrial of Danio rerio (Zebrafish).